We begin with the raw amino-acid sequence, 138 residues long: Transcriptional activator protein (138 aa).

The span at 1–20 (MTGSKKTPSTSPSKKLSSPP) shows a compositional bias: low complexity. The segment at 1-23 (MTGSKKTPSTSPSKKLSSPPEVK) is disordered. A Nuclear localization signal motif is present at residues 23–37 (KLRHRFAKRQIRRRR). A zinc finger spans residues 42–59 (CGCSIYIHINCVNNGFTH). The span at 85–106 (NTASGDANVHTQPGISHSSQSK) shows a compositional bias: polar residues. The interval 85-123 (NTASGDANVHTQPGISHSSQSKPQHEDSVGSPQSLLQLP) is disordered. The segment covering 113-123 (VGSPQSLLQLP) has biased composition (low complexity). The transactivation stretch occupies residues 124–138 (SLDDVDDDFWADLLK).

The protein belongs to the geminiviridae transcriptional activator protein family. As to quaternary structure, monomer. Homodimer. Homooligomer. Self-interaction correlates with nuclear localization and efficient activation of transcription. Monomers suppress local silencing by interacting with and inactivating host adenosine kinase 2 (ADK2) in the cytoplasm. Interacts with and inhibits host SNF1 kinase. Binds to ssDNA. In terms of processing, phosphorylated.

It is found in the host nucleus. It localises to the host cytoplasm. Functionally, strong activator of the late viral genes promoters. Enhances the expression of the capsid protein and nuclear shuttle protein. Acts as a suppressor of RNA-mediated gene silencing, also known as post-transcriptional gene silencing (PTGS), a mechanism of plant viral defense that limits the accumulation of viral RNAs. Suppresses the host RNA silencing by inhibiting adenosine kinase 2 (ADK2), a kinase involved in a general methylation pathway. Also suppresses the host basal defense by interacting with and inhibiting SNF1 kinase, a key regulator of cell metabolism implicated in innate antiviral defense. Determines pathogenicity. This Pepper huasteco yellow vein virus (PHYVV) protein is Transcriptional activator protein.